The following is a 374-amino-acid chain: uncharacterized protein (374 aa).

A coiled-coil region spans residues 39-66 (RDVRKHLESRDAKQELIDSLEEAVRDSR).

This is an uncharacterized protein from Mycobacterium tuberculosis (strain CDC 1551 / Oshkosh).